A 184-amino-acid polypeptide reads, in one-letter code: UPF0398 protein BALH_1408 (184 aa).

It belongs to the UPF0398 family.

This Bacillus thuringiensis (strain Al Hakam) protein is UPF0398 protein BALH_1408.